Reading from the N-terminus, the 339-residue chain is Ketol-acid reductoisomerase (NADP(+)) (339 aa).

The KARI N-terminal Rossmann domain occupies 1-182 (MRVYYDRDAD…GGGRSGIIET (182 aa)). NADP(+)-binding positions include 24–27 (YGSQ), Lys48, Ser51, Thr53, and 83–86 (DELQ). His108 is a catalytic residue. Residue Gly134 participates in NADP(+) binding. Positions 183 to 328 (TFQEECETDL…AKLRGMMPWI (146 aa)) constitute a KARI C-terminal knotted domain. Residues Asp191, Glu195, Glu227, and Glu231 each contribute to the Mg(2+) site. Ser252 serves as a coordination point for substrate.

Belongs to the ketol-acid reductoisomerase family. It depends on Mg(2+) as a cofactor.

It catalyses the reaction (2R)-2,3-dihydroxy-3-methylbutanoate + NADP(+) = (2S)-2-acetolactate + NADPH + H(+). The catalysed reaction is (2R,3R)-2,3-dihydroxy-3-methylpentanoate + NADP(+) = (S)-2-ethyl-2-hydroxy-3-oxobutanoate + NADPH + H(+). The protein operates within amino-acid biosynthesis; L-isoleucine biosynthesis; L-isoleucine from 2-oxobutanoate: step 2/4. It functions in the pathway amino-acid biosynthesis; L-valine biosynthesis; L-valine from pyruvate: step 2/4. Its function is as follows. Involved in the biosynthesis of branched-chain amino acids (BCAA). Catalyzes an alkyl-migration followed by a ketol-acid reduction of (S)-2-acetolactate (S2AL) to yield (R)-2,3-dihydroxy-isovalerate. In the isomerase reaction, S2AL is rearranged via a Mg-dependent methyl migration to produce 3-hydroxy-3-methyl-2-ketobutyrate (HMKB). In the reductase reaction, this 2-ketoacid undergoes a metal-dependent reduction by NADPH to yield (R)-2,3-dihydroxy-isovalerate. The sequence is that of Ketol-acid reductoisomerase (NADP(+)) from Allorhizobium ampelinum (strain ATCC BAA-846 / DSM 112012 / S4) (Agrobacterium vitis (strain S4)).